Consider the following 327-residue polypeptide: Gamma-resorcylate decarboxylase (327 aa).

Residues E8 and H10 each contribute to the Zn(2+) site. F23, H164, and D287 together coordinate 2,6-dihydroxybenzoate. The Zn(2+) site is built by H164 and D287. Residue D287 is part of the active site.

The protein belongs to the metallo-dependent hydrolases superfamily. ACMSD family. Homotetramer. Dimer of dimers. Zn(2+) serves as cofactor.

The catalysed reaction is 2,6-dihydroxybenzoate + H(+) = resorcinol + CO2. The enzyme catalyses 2,3-dihydroxybenzoate + H(+) = catechol + CO2. The protein operates within aromatic compound metabolism. Inhibited by CuCl(2), monoiodoacetate and diethylpyrocarbonate. Inhibited by 2,3-dihydroxybenzaldehyde, which is an analog of the substrate 2,3-dihydroxybenzoate. Functionally, involved in the gamma-resorcylate (2,6-dihydroxybenzoate) catabolism. Catalyzes the reversible decarboxylation of gamma-resorcylate to resorcinol. The reaction is reversible, but equilibrium greatly favors the decarboxylation reaction. Also catalyzes the decarboxylation of 2,3-dihydroxybenzoate to catechol, but does not act on 2,4-dihydroxybenzoate, 2,5-dihydroxybenzoate, 3,4-dihydroxybenzoate, 3,5-dihydroxybenzoate, 2-hydroxybenzoate, or 3-hydroxybenzoate. Only resorcinol is carboxylated by the reverse reaction. This Rhizobium sp. (strain MTP-10005) protein is Gamma-resorcylate decarboxylase.